A 486-amino-acid chain; its full sequence is NADH-quinone oxidoreductase subunit N 1 (486 aa).

Helical transmembrane passes span 15–35 (FLPEIILTVMGTLLMVLDPVI), 46–66 (ISLIALVMALGASIYAYGIAG), 72–92 (MLMVDGFATFFRVVVITVGIL), 111–128 (YHALLLFSIAGQCLMAAS), 131–151 (LIMVFIGLEISSIASYVLAGY), 166–186 (FLLGSFATGFFLYGVAWIYGL), 208–228 (FVGIAAALMFVGLAFKVSAAP), 241–261 (PTPVSAFLSAGPKAAAFAIFL), 276–296 (QPLVWTAALASMCIGNFAAIL), 303–323 (MLAYSSIAHAGYVLVALTAHS), 331–351 (MFYLAGYAFMNVGAFAAVSVL), 375–395 (AAMFTIFLLSLLGVPLTGGFF), 410–432 (IWLTVLGLLNSAVGAYYYLRILV), and 455–475 (FALILPALGTLALGIFPGWVL).

Belongs to the complex I subunit 2 family. As to quaternary structure, NDH-1 is composed of 14 different subunits. Subunits NuoA, H, J, K, L, M, N constitute the membrane sector of the complex.

The protein resides in the cell inner membrane. It carries out the reaction a quinone + NADH + 5 H(+)(in) = a quinol + NAD(+) + 4 H(+)(out). In terms of biological role, NDH-1 shuttles electrons from NADH, via FMN and iron-sulfur (Fe-S) centers, to quinones in the respiratory chain. The immediate electron acceptor for the enzyme in this species is believed to be ubiquinone. Couples the redox reaction to proton translocation (for every two electrons transferred, four hydrogen ions are translocated across the cytoplasmic membrane), and thus conserves the redox energy in a proton gradient. The protein is NADH-quinone oxidoreductase subunit N 1 of Solibacter usitatus (strain Ellin6076).